The sequence spans 462 residues: uncharacterized protein (462 aa).

The HTH gntR-type domain maps to 22–90 (KPIYKALAGQ…VGSGTFVSYD (69 aa)). The segment at residues 50-69 (QRELADYLDLNVSTISKAFK) is a DNA-binding region (H-T-H motif). The residue at position 308 (Lys308) is an N6-(pyridoxal phosphate)lysine.

It in the C-terminal section; belongs to the class-I pyridoxal-phosphate-dependent aminotransferase family. Pyridoxal 5'-phosphate is required as a cofactor.

This is an uncharacterized protein from Bacillus subtilis (strain 168).